The sequence spans 104 residues: Large ribosomal subunit protein uL23 (104 aa).

The protein belongs to the universal ribosomal protein uL23 family. As to quaternary structure, part of the 50S ribosomal subunit. Contacts protein L29, and trigger factor when it is bound to the ribosome.

Its function is as follows. One of the early assembly proteins it binds 23S rRNA. One of the proteins that surrounds the polypeptide exit tunnel on the outside of the ribosome. Forms the main docking site for trigger factor binding to the ribosome. The protein is Large ribosomal subunit protein uL23 of Trichormus variabilis (strain ATCC 29413 / PCC 7937) (Anabaena variabilis).